The following is a 540-amino-acid chain: Chaperonin GroEL (540 aa).

Residues Thr30–Pro33, Asp87–Thr91, Gly415, and Asp496 contribute to the ATP site.

Belongs to the chaperonin (HSP60) family. As to quaternary structure, forms a cylinder of 14 subunits composed of two heptameric rings stacked back-to-back. Interacts with the co-chaperonin GroES.

It localises to the cytoplasm. The catalysed reaction is ATP + H2O + a folded polypeptide = ADP + phosphate + an unfolded polypeptide.. Its function is as follows. Together with its co-chaperonin GroES, plays an essential role in assisting protein folding. The GroEL-GroES system forms a nano-cage that allows encapsulation of the non-native substrate proteins and provides a physical environment optimized to promote and accelerate protein folding. This Symbiobacterium thermophilum (strain DSM 24528 / JCM 14929 / IAM 14863 / T) protein is Chaperonin GroEL.